The following is a 505-amino-acid chain: Deoxyguanosinetriphosphate triphosphohydrolase (505 aa).

The HD domain occupies 66–273 (RLTHSMEVQQ…MEAADDISYC (208 aa)).

Belongs to the dGTPase family. Type 1 subfamily. In terms of assembly, homotetramer. Mg(2+) is required as a cofactor.

The enzyme catalyses dGTP + H2O = 2'-deoxyguanosine + triphosphate + H(+). DGTPase preferentially hydrolyzes dGTP over the other canonical NTPs. The protein is Deoxyguanosinetriphosphate triphosphohydrolase of Escherichia coli O17:K52:H18 (strain UMN026 / ExPEC).